The chain runs to 409 residues: Elongation factor Tu (409 aa).

The region spanning 10 to 214 is the tr-type G domain; the sequence is KPHVNIGTIG…AVDDNIPEPE (205 aa). The segment at 19–26 is G1; the sequence is GHVDHGKT. 19–26 serves as a coordination point for GTP; that stretch reads GHVDHGKT. Thr-26 is a binding site for Mg(2+). A G2 region spans residues 60-64; it reads GITIN. The tract at residues 81-84 is G3; sequence DCPG. Residues 81 to 85 and 136 to 139 contribute to the GTP site; these read DCPGH and NKKD. Residues 136-139 form a G4 region; the sequence is NKKD. The tract at residues 174–176 is G5; sequence SAL.

The protein belongs to the TRAFAC class translation factor GTPase superfamily. Classic translation factor GTPase family. EF-Tu/EF-1A subfamily. Monomer.

The protein localises to the cytoplasm. It carries out the reaction GTP + H2O = GDP + phosphate + H(+). In terms of biological role, GTP hydrolase that promotes the GTP-dependent binding of aminoacyl-tRNA to the A-site of ribosomes during protein biosynthesis. The polypeptide is Elongation factor Tu (Crocosphaera subtropica (strain ATCC 51142 / BH68) (Cyanothece sp. (strain ATCC 51142))).